Here is a 668-residue protein sequence, read N- to C-terminus: UvrABC system protein B (668 aa).

In terms of domain architecture, Helicase ATP-binding spans 36 to 423 (DNIKGGEKAQ…TETVVEQIIR (388 aa)). 49–56 (GATGTGKT) is an ATP binding site. Residues 102-125 (YYDYYQPEAYVPSSDTYIEKDSSI) carry the Beta-hairpin motif. The Helicase C-terminal domain occupies 440–606 (QMDDLLGEIN…TIKKEIRDLI (167 aa)). The UVR domain occupies 632–667 (QEAIKKLQKQMHEAAELLDFELAAQIRDMVLELKSM).

It belongs to the UvrB family. In terms of assembly, forms a heterotetramer with UvrA during the search for lesions. Interacts with UvrC in an incision complex.

The protein resides in the cytoplasm. Functionally, the UvrABC repair system catalyzes the recognition and processing of DNA lesions. A damage recognition complex composed of 2 UvrA and 2 UvrB subunits scans DNA for abnormalities. Upon binding of the UvrA(2)B(2) complex to a putative damaged site, the DNA wraps around one UvrB monomer. DNA wrap is dependent on ATP binding by UvrB and probably causes local melting of the DNA helix, facilitating insertion of UvrB beta-hairpin between the DNA strands. Then UvrB probes one DNA strand for the presence of a lesion. If a lesion is found the UvrA subunits dissociate and the UvrB-DNA preincision complex is formed. This complex is subsequently bound by UvrC and the second UvrB is released. If no lesion is found, the DNA wraps around the other UvrB subunit that will check the other stand for damage. This is UvrABC system protein B from Streptococcus thermophilus (strain CNRZ 1066).